A 958-amino-acid polypeptide reads, in one-letter code: Glycine dehydrogenase (decarboxylating) (958 aa).

An N6-(pyridoxal phosphate)lysine modification is found at K707.

It belongs to the GcvP family. As to quaternary structure, the glycine cleavage system is composed of four proteins: P, T, L and H. Pyridoxal 5'-phosphate serves as cofactor.

The catalysed reaction is N(6)-[(R)-lipoyl]-L-lysyl-[glycine-cleavage complex H protein] + glycine + H(+) = N(6)-[(R)-S(8)-aminomethyldihydrolipoyl]-L-lysyl-[glycine-cleavage complex H protein] + CO2. Its function is as follows. The glycine cleavage system catalyzes the degradation of glycine. The P protein binds the alpha-amino group of glycine through its pyridoxal phosphate cofactor; CO(2) is released and the remaining methylamine moiety is then transferred to the lipoamide cofactor of the H protein. This chain is Glycine dehydrogenase (decarboxylating), found in Stutzerimonas stutzeri (strain A1501) (Pseudomonas stutzeri).